Consider the following 368-residue polypeptide: Histone macroH2A1.1 (368 aa).

Positions 154–177 (AVSSSSAAASSSSSASSSSSVAPK) are disordered. The region spanning 184 to 368 (TILSKKTLHL…VYNAELINTN (185 aa)) is the Macro domain. Positions 203, 204, 225, 226, 275, 313, 314, 315, 316, and 317 each coordinate a glycoprotein.

This sequence belongs to the histone H2A family. The nucleosome is a histone octamer containing two molecules each of H2A, H2B, H3 and H4 assembled in one H3-H4 heterotetramer and two H2A-H2B heterodimers.

The protein resides in the nucleus. The protein localises to the chromosome. Its function is as follows. Variant histone H2A which replaces conventional H2A in a subset of nucleosomes where it represses transcription. Nucleosomes wrap and compact DNA into chromatin, limiting DNA accessibility to the cellular machineries which require DNA as a template. Histones thereby play a central role in transcription regulation, DNA repair, DNA replication and chromosomal stability. DNA accessibility is regulated via a complex set of post-translational modifications of histones, also called histone code, and nucleosome remodeling. Functionally, specifically binds poly-ADP-ribose and plays a key role in NAD(+) metabolism. Able to bind to the ends of poly-ADP-ribose chains created by PARP1 and cap them. This prevents PARP1 from further addition of ADP-ribose and thus limits the consumption of nuclear NAD(+), allowing the cell to maintain proper NAD(+) levels in both the nucleus and the mitochondria to promote proper mitochondrial respiration. The chain is Histone macroH2A1.1 from Capsaspora owczarzaki (strain ATCC 30864).